Reading from the N-terminus, the 291-residue chain is Nucleotide-binding protein Cthe_0113 (291 aa).

ATP is bound at residue 8–15 (GISGAGKS). 59–62 (DIRG) contributes to the GTP binding site.

It belongs to the RapZ-like family.

Functionally, displays ATPase and GTPase activities. This is Nucleotide-binding protein Cthe_0113 from Acetivibrio thermocellus (strain ATCC 27405 / DSM 1237 / JCM 9322 / NBRC 103400 / NCIMB 10682 / NRRL B-4536 / VPI 7372) (Clostridium thermocellum).